A 507-amino-acid polypeptide reads, in one-letter code: Phosphoprotein (507 aa).

The segment at 1–48 is interaction with N0; it reads MAEEQARHVKNGLECIRALKAEPIGSLAIEEAMAAWSEISDNPGQERA. Disordered regions lie at residues 41 to 99, 134 to 163, 201 to 231, and 250 to 273; these read DNPG…PPRN, GLDGDSTLSGGDNESENSDVDIGEPDTEGY, NNFPKLGKTLNVPPPPDPGRASTSGTPIKKG, and GATQCARKSPSEPSGPGAPAGNVP. Ser-86 bears the Phosphoserine mark. A compositionally biased stretch (low complexity) spans 134-145; it reads GLDGDSTLSGGD. Acidic residues predominate over residues 146–160; it reads NESENSDVDIGEPDT. At Ser-151 the chain carries Phosphoserine. Positions 260 to 270 are enriched in low complexity; sequence SEPSGPGAPAG. Residues 304–376 are multimerization; it reads GDYYDDELFS…LSSIMIAIPG (73 aa). Interaction with the L polymerase regions lie at residues 361 to 377 and 396 to 410; these read STLEGHLSSIMIAIPGL and PIIGRDSGRALAEVL. Positions 457–507 are x domain (XD); the sequence is GPASRSVIRSIIKSSRLEEDRKRYLMTLLDDIKGANDLAKFHQMLMKIIMK. Residues 459 to 507 form an interaction with the nucleocapsid (N-RNA) region; that stretch reads ASRSVIRSIIKSSRLEEDRKRYLMTLLDDIKGANDLAKFHQMLMKIIMK.

Belongs to the morbillivirus P protein family. As to quaternary structure, homotetramer. Interacts (via multimerization domain and XD domain) with polymerase L; this interaction forms the polymerase L-P complex. Interacts (via N-terminus) with N0 (via Ncore); this interaction allows P to chaperon N0 to avoid N polymerization and non-specific RNA binding before encapsidation. Interacts (via C-terminus) with N-RNA template (via Ntail); this interaction maintains the P/L complex anchored to the nucleocapsid template during the sequential transcription. Interacts (via C-terminus) with protein C this interaction allows C to associate with the ribonucleocapsid. Post-translationally, phosphorylation on serines by host CK2 is necessary for the formation of viral factories.

Its function is as follows. Essential cofactor of the RNA polymerase L that plays a central role in the transcription and replication by forming the polymerase complex with RNA polymerase L and recruiting L to the genomic N-RNA template for RNA synthesis. Also plays a central role in the encapsidation of nascent RNA chains by forming the encapsidation complex with the nucleocapsid protein N (N-P complex). Acts as a chaperone for newly synthesized free N protein, so-called N0, allowing encapsidation of nascent RNA chains during replication. The nucleoprotein protein N prevents excessive phosphorylation of P, which leads to down-regulation of viral transcription/ replication. Participates, together with N, in the formation of viral factories (viroplasms), which are large inclusions in the host cytoplasm where replication takes place. This chain is Phosphoprotein (P/V), found in Measles virus (strain Edmonston) (MeV).